Here is a 22-residue protein sequence, read N- to C-terminus: C-type natriuretic peptide (22 aa).

Cysteine 6 and cysteine 22 are oxidised to a cystine.

It belongs to the natriuretic peptide family.

It is found in the secreted. Functionally, hormone which plays a role in endochondral ossification through regulation of cartilaginous growth plate chondrocytes proliferation and differentiation. May also be vasoactive and natriuretic. Specifically binds and stimulates the cGMP production of the NPR2 receptor. Binds the clearance receptor NPR3. The polypeptide is C-type natriuretic peptide (NPPC) (Gallus gallus (Chicken)).